A 405-amino-acid chain; its full sequence is Adenosylhomocysteinase (405 aa).

Substrate contacts are provided by Asp113 and Glu138. 139 to 141 contacts NAD(+); that stretch reads TTT. Positions 168 and 172 each coordinate substrate. NAD(+) is bound by residues Asn173, 202-207, Glu225, Asn260, 281-283, and Asn327; these read GYGWCG and AGH.

Belongs to the adenosylhomocysteinase family. Requires NAD(+) as cofactor.

It localises to the cytoplasm. The enzyme catalyses S-adenosyl-L-homocysteine + H2O = L-homocysteine + adenosine. The protein operates within amino-acid biosynthesis; L-homocysteine biosynthesis; L-homocysteine from S-adenosyl-L-homocysteine: step 1/1. In terms of biological role, may play a key role in the regulation of the intracellular concentration of adenosylhomocysteine. The polypeptide is Adenosylhomocysteinase (Archaeoglobus fulgidus (strain ATCC 49558 / DSM 4304 / JCM 9628 / NBRC 100126 / VC-16)).